A 1742-amino-acid chain; its full sequence is NACHT and WD repeat domain-containing protein 2 (1742 aa).

LRR repeat units follow at residues 386 to 410 (FYEYKCESLNIVHNYILPSKAGHIN), 677 to 698 (LEDVLALDNSVMSELKENTRPS), 724 to 747 (VKNVTLLVWANRHLQLIAQKLYLQ), 883 to 906 (YSQEKELKFLANTLRSIKNKVTAF), and 925 to 953 (LPKLRHLLLECDKDGPKYCSIVPLHSSMD). The 328-residue stretch at 410 to 737 (NPLIIYGGPC…TLLVWANRHL (328 aa)) folds into the NACHT domain. 11 WD repeats span residues 963-1004 (LSSS…LLRQ), 1007-1046 (TAQSVILGMKLTSDEKYLVVATTNNTLLIYDNVNSCLLSE), 1140-1179 (FSGGFVKFLLILDTAQEMVMVDSEGSLSVWNTEDISSPQL), 1229-1271 (KHNE…ASLQ), 1272-1311 (EISGSIVKLVKSSHHNMLLSLSTSGVLSIWDIDIITAMSN), 1314-1353 (KTGKPIQSLLLPARGEIIYSLDGSDCVHKWNFSSGFIEAV), 1355-1394 (KHEGIVEHCVLTSTGDIMVTSDDKSSQYVWHTSSGENLFR), 1396-1434 (NGQRISQLLITHNDQFVVSLCEENASRVWRLATGHRVCN), 1476-1516 (EDGT…ICRR), 1522-1564 (NFLK…VHAS), and 1614-1653 (SLYKTPTFLALSQRHLNIIVGFDDGSIGIYTVVDRVDAAL).

This is NACHT and WD repeat domain-containing protein 2 (NWD2) from Homo sapiens (Human).